The following is a 455-amino-acid chain: Putative PTS system EIIBC component YbbF (455 aa).

The PTS EIIB type-1 domain maps to 8–90 (HHLAQKILEL…SKLVSAEEGA (83 aa)). Catalysis depends on Cys30, which acts as the Phosphocysteine intermediate; for EIIB activity. The region spanning 116-455 (RKIASIFIPL…YKDEMASQFD (340 aa)) is the PTS EIIC type-1 domain. 10 helical membrane-spanning segments follow: residues 118–138 (IASIFIPLIPALVASGLITGI), 154–174 (IAIILTVIGSGLFTYLGILVG), 181–201 (FGGTPALGALAGILIINPEIA), 210–230 (LLPGRGGLIGVLFAAIFIAYT), 250–270 (VSLLITGIVTYVVFMPLGGFI), 281–301 (ILDIGGIAAGFILGATFLPLV), 325–345 (LLPILAMGGAGQVGAAFAVFV), 355–375 (AIAGGLPSGLLGIGEPLIFGV), 399–419 (YFQVATIAIGVSGLPLSFLVL), and 423–443 (IILYIVGLFISYAAGFLLTYA).

It localises to the cell membrane. Its function is as follows. The phosphoenolpyruvate-dependent sugar phosphotransferase system (sugar PTS), a major carbohydrate active -transport system, catalyzes the phosphorylation of incoming sugar substrates concomitantly with their translocation across the cell membrane. The protein is Putative PTS system EIIBC component YbbF (ybbF) of Bacillus subtilis (strain 168).